We begin with the raw amino-acid sequence, 423 residues long: Imidazolonepropionase (423 aa).

Residues His-78 and His-80 each coordinate Fe(3+). Zn(2+) is bound by residues His-78 and His-80. 4-imidazolone-5-propanoate contacts are provided by Arg-87, Tyr-150, and His-183. Residue Tyr-150 coordinates N-formimidoyl-L-glutamate. His-247 is a binding site for Fe(3+). Zn(2+) is bound at residue His-247. Residue Glu-250 coordinates 4-imidazolone-5-propanoate. Asp-322 contributes to the Fe(3+) binding site. Residue Asp-322 participates in Zn(2+) binding. 2 residues coordinate N-formimidoyl-L-glutamate: Asn-324 and Gly-326. Ser-327 is a binding site for 4-imidazolone-5-propanoate.

The protein belongs to the metallo-dependent hydrolases superfamily. HutI family. The cofactor is Zn(2+). Requires Fe(3+) as cofactor.

It localises to the cytoplasm. The catalysed reaction is 4-imidazolone-5-propanoate + H2O = N-formimidoyl-L-glutamate. It functions in the pathway amino-acid degradation; L-histidine degradation into L-glutamate; N-formimidoyl-L-glutamate from L-histidine: step 3/3. Catalyzes the hydrolytic cleavage of the carbon-nitrogen bond in imidazolone-5-propanoate to yield N-formimidoyl-L-glutamate. It is the third step in the universal histidine degradation pathway. The protein is Imidazolonepropionase of Bacillus cytotoxicus (strain DSM 22905 / CIP 110041 / 391-98 / NVH 391-98).